We begin with the raw amino-acid sequence, 292 residues long: Elongation factor Ts (292 aa).

The interval 79 to 82 (TDFV) is involved in Mg(2+) ion dislocation from EF-Tu.

Belongs to the EF-Ts family.

The protein localises to the cytoplasm. In terms of biological role, associates with the EF-Tu.GDP complex and induces the exchange of GDP to GTP. It remains bound to the aminoacyl-tRNA.EF-Tu.GTP complex up to the GTP hydrolysis stage on the ribosome. The sequence is that of Elongation factor Ts from Staphylococcus epidermidis (strain ATCC 12228 / FDA PCI 1200).